Here is a 254-residue protein sequence, read N- to C-terminus: Zinc import ATP-binding protein ZnuC (254 aa).

The ABC transporter domain occupies 5 to 219 (VELKEVCLSF…PEFARLFGRP (215 aa)). 37–44 (GPNGAGKS) provides a ligand contact to ATP. The segment covering 233–242 (CDGEHHHHEP) has biased composition (basic and acidic residues). The disordered stretch occupies residues 233 to 254 (CDGEHHHHEPQVPVIRLPSRNQ).

This sequence belongs to the ABC transporter superfamily. Zinc importer (TC 3.A.1.15.5) family. In terms of assembly, the complex is composed of two ATP-binding proteins (ZnuC), two transmembrane proteins (ZnuB) and a solute-binding protein (ZnuA).

It localises to the cell inner membrane. The enzyme catalyses Zn(2+)(out) + ATP(in) + H2O(in) = Zn(2+)(in) + ADP(in) + phosphate(in) + H(+)(in). Its function is as follows. Part of the ABC transporter complex ZnuABC involved in zinc import. Responsible for energy coupling to the transport system. The protein is Zinc import ATP-binding protein ZnuC of Aeromonas hydrophila subsp. hydrophila (strain ATCC 7966 / DSM 30187 / BCRC 13018 / CCUG 14551 / JCM 1027 / KCTC 2358 / NCIMB 9240 / NCTC 8049).